The sequence spans 210 residues: MLPLPSCSLPILLLFLLPSVPIESQPPPSTLPPFLAPEWDLLSPRVVLSRGAPAGPPLLFLLEAGAFRESAGAPANRSRRGVSETAPASRRGELAVCDAVSGWVTDRRTAVDLRGREVEVLGEVPAAGGSPLRQYFFETRCKADNAEEGGPGAGGGGCRGVDRRHWVSECKAKQSYVRALTADAQGRVGWRWIRIDTACVCTLLSRTGRA.

A signal peptide spans 1–24 (MLPLPSCSLPILLLFLLPSVPIES). Residues 25 to 80 (QPPPSTLPPFLAPEWDLLSPRVVLSRGAPAGPPLLFLLEAGAFRESAGAPANRSRR) constitute a propeptide that is removed on maturation. Residue asparagine 76 is glycosylated (N-linked (GlcNAc...) asparagine). Cystine bridges form between cysteine 97/cysteine 170, cysteine 141/cysteine 199, and cysteine 158/cysteine 201.

It belongs to the NGF-beta family. In terms of tissue distribution, highest levels in prostate, lower levels in thymus, placenta, and skeletal muscle. Expressed in embryonic and adult tissues.

It is found in the secreted. Functionally, target-derived survival factor for peripheral sensory sympathetic neurons. May promote ameloblast differentiation and subsequent reduction in proliferation of ameloblasts. This chain is Neurotrophin-4 (NTF4), found in Homo sapiens (Human).